Here is a 352-residue protein sequence, read N- to C-terminus: C-C chemokine receptor type 5 (352 aa).

Residues 1–30 (MDYQVSSPIYDIDYYTSEPCQKINVKQIAA) are Extracellular-facing. Tyr-3 bears the Sulfotyrosine mark. 2 O-linked (GalNAc...) serine glycosylation sites follow: Ser-6 and Ser-7. Tyr-10, Tyr-14, and Tyr-15 each carry sulfotyrosine. 2 cysteine pairs are disulfide-bonded: Cys-20/Cys-269 and Cys-101/Cys-178. Residues 31–58 (RLLPPLYSLVFIFGFVGNMLVILILINC) traverse the membrane as a helical segment. Topologically, residues 59 to 68 (KRLKSMTDIY) are cytoplasmic. Residues 69 to 89 (LLNLAISDLFFLLTVPFWAHY) form a helical membrane-spanning segment. Topologically, residues 90 to 102 (AAAQWDFGNTMCQ) are extracellular. Residues 103–124 (LLTGLYFIGFFSGIFFIILLTI) form a helical membrane-spanning segment. At 125 to 141 (DRYLAIVHAVFALKART) the chain is on the cytoplasmic side. The helical transmembrane segment at 142-166 (VTFGVVTSVITWVVAVFASLPGIIF) threads the bilayer. Topologically, residues 167–198 (TRSQKEGLHYTCSSHFPYSQYQFWKNFQTLKI) are extracellular. Residues 199–218 (VILGLVLPLLVMVICYSGIL) form a helical membrane-spanning segment. The Cytoplasmic segment spans residues 219 to 235 (KTLLRCRNEKKRHRAVR). Residues 236–260 (LIFTIMIVYFLFWAPYNIVLLLNTF) traverse the membrane as a helical segment. Over 261–277 (QEFFGLNNCSSSNRLDQ) the chain is Extracellular. A helical transmembrane segment spans residues 278-301 (AMQVTETLGMTHCCINPIIYAFVG). Over 302–352 (EKFRNYLLVFFQKHIAKRFCKCCSIFQQEAPERASSVYTRSTGEQEISVGL) the chain is Cytoplasmic. 3 S-palmitoyl cysteine lipidation sites follow: Cys-321, Cys-323, and Cys-324. Ser-336, Ser-337, Ser-342, and Ser-349 each carry phosphoserine; by BARK1.

Belongs to the G-protein coupled receptor 1 family. As to quaternary structure, interacts with PRAF2. Efficient ligand binding to CCL3/MIP-1alpha and CCL4/MIP-1beta requires sulfation, O-glycosylation and sialic acid modifications. Glycosylation on Ser-6 is required for efficient binding of CCL4. Interacts with GRK2. Interacts with ARRB1 and ARRB2. Interacts with CNIH4. Interacts with S100A4; this interaction stimulates T-lymphocyte chemotaxis. Sulfated on at least 2 of the N-terminal tyrosines. Sulfation is required for efficient binding of the chemokines, CCL3 and CCL4. In terms of processing, palmitoylation in the C-terminal is important for cell surface expression. Post-translationally, phosphorylation on serine residues in the C-terminal is stimulated by binding CC chemokines especially by APO-RANTES. O-glycosylated, but not N-glycosylated. Ser-6 appears to be the major site even if Ser-7 may be also O-glycosylated. Also sialylated glycans present which contribute to chemokine binding. Thr-16 and Ser-17 may also be glycosylated and, if so, with small moieties such as a T-antigen.

The protein resides in the cell membrane. In terms of biological role, receptor for a number of inflammatory CC-chemokines including CCL3/MIP-1-alpha, CCL4/MIP-1-beta and RANTES and subsequently transduces a signal by increasing the intracellular calcium ion level. May play a role in the control of granulocytic lineage proliferation or differentiation. Participates in T-lymphocyte migration to the infection site by acting as a chemotactic receptor. This is C-C chemokine receptor type 5 (CCR5) from Pan paniscus (Pygmy chimpanzee).